A 190-amino-acid polypeptide reads, in one-letter code: Protein LIGHT-DEPENDENT SHORT HYPOCOTYLS 1 (190 aa).

Residues 1–26 show a composition bias toward polar residues; the sequence is MDLISHQPNKNPNSSTQLTPPSSSRY. 2 disordered regions span residues 1–28 and 145–190; these read MDLI…RYEN and GVSY…GATV. Residues 25 to 152 form the ALOG domain; it reads RYENQKRRDW…ARGVSYEKKR (128 aa). Positions 150–154 match the Nuclear localization signal motif; that stretch reads KKRKR. Over residues 158-179 the composition is skewed to low complexity; that stretch reads QKPQTQPPLQLQQQQQQPQQGQ. Polar residues predominate over residues 180–190; sequence SMMANYSGATV.

The protein belongs to the plant homeotic and developmental regulators ALOG protein family. In terms of tissue distribution, expressed in hypocotyls, shoot apices and lateral root primordia and, weakly, in vascular tissues.

The protein localises to the nucleus. In terms of biological role, probable transcription regulator that acts as a developmental regulator by promoting cell growth in response to continuous red (cR), far-red (cFR) and blue (cB) light in a phytochrome-dependent manner, at least during seedling development. The polypeptide is Protein LIGHT-DEPENDENT SHORT HYPOCOTYLS 1 (LSH1) (Arabidopsis thaliana (Mouse-ear cress)).